We begin with the raw amino-acid sequence, 171 residues long: Bursicon (171 aa).

An N-terminal signal peptide occupies residues 1–31 (MISSPSTPATFAAGSLVLLCLVLGGGHFALA). Intrachain disulfides connect cysteine 47-cysteine 96, cysteine 61-cysteine 110, cysteine 71-cysteine 131, cysteine 75-cysteine 133, and cysteine 93-cysteine 136. Positions 47–137 (CQVTPVIHVL…PLECMCRPCT (91 aa)) constitute a CTCK domain.

Heterodimer of burs and pburs.

The protein localises to the secreted. In terms of biological role, final heterodimeric neurohormone released at the end of the molting cycle, involved in the sclerotization (tanning) of the insect cuticle, melanization and wing spreading. In Culex pipiens pipiens (Northern house mosquito), this protein is Bursicon.